Reading from the N-terminus, the 153-residue chain is Small ribosomal subunit protein bS16 (153 aa).

It belongs to the bacterial ribosomal protein bS16 family.

This is Small ribosomal subunit protein bS16 from Leifsonia xyli subsp. xyli (strain CTCB07).